Reading from the N-terminus, the 307-residue chain is Serine/threonine-protein phosphatase PP2A-1 catalytic subunit (307 aa).

The Mn(2+) site is built by Asp54, His56, Asp82, and Asn114. His115 acts as the Proton donor in catalysis. Positions 164 and 238 each coordinate Mn(2+). Residues 286 to 307 (FEPAPRRGAEGEVNRRTPDYFL) are disordered. The span at 289 to 307 (APRRGAEGEVNRRTPDYFL) shows a compositional bias: basic and acidic residues.

This sequence belongs to the PPP phosphatase family. PP-2A subfamily. Mn(2+) serves as cofactor.

It carries out the reaction O-phospho-L-seryl-[protein] + H2O = L-seryl-[protein] + phosphate. The catalysed reaction is O-phospho-L-threonyl-[protein] + H2O = L-threonyl-[protein] + phosphate. In Acetabularia peniculus (Green alga), this protein is Serine/threonine-protein phosphatase PP2A-1 catalytic subunit.